The following is a 303-amino-acid chain: UDP-N-acetylenolpyruvoylglucosamine reductase (303 aa).

The FAD-binding PCMH-type domain maps to Lys29 to Lys196. Residue Arg174 is part of the active site. Residue Ser225 is the Proton donor of the active site. Glu295 is a catalytic residue.

Belongs to the MurB family. Requires FAD as cofactor.

The protein localises to the cytoplasm. The catalysed reaction is UDP-N-acetyl-alpha-D-muramate + NADP(+) = UDP-N-acetyl-3-O-(1-carboxyvinyl)-alpha-D-glucosamine + NADPH + H(+). Its pathway is cell wall biogenesis; peptidoglycan biosynthesis. Functionally, cell wall formation. The polypeptide is UDP-N-acetylenolpyruvoylglucosamine reductase (Bacillus velezensis (strain DSM 23117 / BGSC 10A6 / LMG 26770 / FZB42) (Bacillus amyloliquefaciens subsp. plantarum)).